A 248-amino-acid polypeptide reads, in one-letter code: Probable transcriptional regulatory protein ECH_0704 (248 aa).

Residues 1 to 21 (MAGHSQFANIKHRKGAQDAKR) form a disordered region.

The protein belongs to the TACO1 family.

It is found in the cytoplasm. The sequence is that of Probable transcriptional regulatory protein ECH_0704 from Ehrlichia chaffeensis (strain ATCC CRL-10679 / Arkansas).